A 228-amino-acid chain; its full sequence is Biopolymer transport protein exbB1 (228 aa).

The next 3 helical transmembrane spans lie at 11 to 31, 116 to 136, and 158 to 178; these read LGLM…LLAE, LTLI…LGLI, and LGVA…AVAG.

It belongs to the ExbB/TolQ family. As to quaternary structure, the accessory proteins ExbB and ExbD seem to form a complex with TonB.

It is found in the cell inner membrane. In terms of biological role, involved in the TonB-dependent energy-dependent transport of various receptor-bound substrates. Protects ExbD from proteolytic degradation and functionally stabilizes TonB. The sequence is that of Biopolymer transport protein exbB1 (exbB1) from Vibrio cholerae serotype O1 (strain ATCC 39315 / El Tor Inaba N16961).